The chain runs to 207 residues: Glycerol-3-phosphate acyltransferase (207 aa).

Helical transmembrane passes span 1–21 (MIIIAYLLGSIQTGLWIGKYF), 42–62 (ILGVKAGIVTLTIDILKGTLA), 65–85 (IPIILGITTISPFFIGFFAII), 105–125 (AGVLLGFAPSFFLYLLVIFLL), 138–158 (ITVAVVGILSVLIFPLVGFIL), and 159–179 (TDYDWIFTTVVILMALTIIIR).

This sequence belongs to the PlsY family. As to quaternary structure, probably interacts with PlsX.

It is found in the cell membrane. The enzyme catalyses an acyl phosphate + sn-glycerol 3-phosphate = a 1-acyl-sn-glycero-3-phosphate + phosphate. Its pathway is lipid metabolism; phospholipid metabolism. In terms of biological role, catalyzes the transfer of an acyl group from acyl-phosphate (acyl-PO(4)) to glycerol-3-phosphate (G3P) to form lysophosphatidic acid (LPA). This enzyme utilizes acyl-phosphate as fatty acyl donor, but not acyl-CoA or acyl-ACP. This is Glycerol-3-phosphate acyltransferase from Streptococcus agalactiae serotype Ia (strain ATCC 27591 / A909 / CDC SS700).